Reading from the N-terminus, the 347-residue chain is Gas vesicle ATPase GvpN (347 aa).

Residues 1-50 are disordered; it reads MTNSSRERKVRGSQIRTSRREKQDKNARNRTEKELTRLENHQTHRTKNGT. A compositionally biased stretch (basic and acidic residues) spans 18–42; the sequence is SRREKQDKNARNRTEKELTRLENHQ. ATP is bound at residue 91–98; the sequence is GPTGCGKT.

Belongs to the CbbQ/NirQ/NorQ/GpvN family. In terms of assembly, forms homodimers, a GvpN-GvpO heterodimer, interacts with GvpC and GvpL, might interact with GvpA.

Its subcellular location is the gas vesicle. The protein resides in the cytoplasm. The catalysed reaction is ATP + H2O = ADP + phosphate + H(+). In terms of biological role, an ATPase that functions in gas vesicle formation. A minor component of the gas vesicle, also found in soluble extracts. Gas vesicles are hollow, gas filled proteinaceous nanostructures found in some microorganisms. They allow positioning of halobacteria at the optimal depth for growth in the poorly aerated, shallow brine pools of their habitat. Its function is as follows. Expression of a 9.5 kb mc-vac DNA fragment containing 2 divergently transcribed regions (gvpD-gvpE-gvpF-gvpG-gvpH-gvpI-gvpJ-gvpK-gvpL-gvpM and gvpA-gvpC-gvpN-gvpO) allows H.volcanii to produce gas vesicles. This Haloferax mediterranei (strain ATCC 33500 / DSM 1411 / JCM 8866 / NBRC 14739 / NCIMB 2177 / R-4) (Halobacterium mediterranei) protein is Gas vesicle ATPase GvpN.